The primary structure comprises 131 residues: Transcription antitermination protein NusB (131 aa).

The protein belongs to the NusB family.

In terms of biological role, involved in transcription antitermination. Required for transcription of ribosomal RNA (rRNA) genes. Binds specifically to the boxA antiterminator sequence of the ribosomal RNA (rrn) operons. The protein is Transcription antitermination protein NusB of Bacillus pumilus (strain SAFR-032).